We begin with the raw amino-acid sequence, 109 residues long: Protein TAR1 (109 aa).

A disordered region spans residues 62-109 (HFTNNWDPRHTGFSPSMTSCSKEHRQGPATKLPSSNYNSDVEDARFQI).

Its subcellular location is the mitochondrion. May be involved in mtDNA stability or mitochondrial gene expression regulation at the post-transcriptional level. The sequence is that of Protein TAR1 (TAR1-A) from Kluyveromyces lactis (strain ATCC 8585 / CBS 2359 / DSM 70799 / NBRC 1267 / NRRL Y-1140 / WM37) (Yeast).